The sequence spans 224 residues: Processed variable antigen (224 aa).

A run of 17 repeats spans residues 1 to 6 (ETGESK), 7 to 12 (ETGESK), 13 to 18 (ETGESK), 19 to 24 (ETGESK), 25 to 30 (ETGESK), 31 to 36 (ETGESK), 37 to 42 (ETGESK), 43 to 48 (ETGESK), 49 to 54 (ETGESK), 55 to 60 (ETGESK), 61 to 66 (ETGESK), 67 to 72 (ETGESK), 73 to 78 (ETGESK), 79 to 84 (ETGESK), 85 to 90 (ETGESK), 91 to 96 (ETGESK), and 97 to 102 (ETGESK). The 17 X 6 AA tandem repeats of E-T-G-E-S-K stretch occupies residues 1–102 (ETGESKETGE…GESKETGESK (102 aa)). A compositionally biased stretch (basic and acidic residues) spans 1–137 (ETGESKETGE…TEESKDREGN (137 aa)). Positions 1-224 (ETGESKETGE…KKADNKKKKK (224 aa)) are disordered. The segment covering 144-153 (ENSENSNVTS) has biased composition (low complexity). Composition is skewed to basic and acidic residues over residues 156 to 173 (EETKKLAEKEENEGEKLG) and 185 to 217 (EDPKKLTEQEENGTKESSEETKDDKPEENEKKA).

In Plasmodium falciparum, this protein is Processed variable antigen.